The primary structure comprises 306 residues: tRNA dimethylallyltransferase (306 aa).

Residue 14 to 21 participates in ATP binding; that stretch reads GPTAAGKS. 16-21 lines the substrate pocket; that stretch reads TAAGKS. Residues 39 to 42 form an interaction with substrate tRNA region; it reads DSRL.

It belongs to the IPP transferase family. Monomer. Mg(2+) serves as cofactor.

It catalyses the reaction adenosine(37) in tRNA + dimethylallyl diphosphate = N(6)-dimethylallyladenosine(37) in tRNA + diphosphate. Its function is as follows. Catalyzes the transfer of a dimethylallyl group onto the adenine at position 37 in tRNAs that read codons beginning with uridine, leading to the formation of N6-(dimethylallyl)adenosine (i(6)A). This is tRNA dimethylallyltransferase from Synechococcus elongatus (strain ATCC 33912 / PCC 7942 / FACHB-805) (Anacystis nidulans R2).